The chain runs to 251 residues: uncharacterized protein (251 aa).

Disordered regions lie at residues 1–93 (MQPG…ASPG), 107–152 (GLRS…SRPQ), 169–188 (PSSI…VSLS), and 224–251 (LQAQ…STPS). Residues 225–234 (QAQNLPSSGP) show a composition bias toward polar residues.

This is an uncharacterized protein from Homo sapiens (Human).